The primary structure comprises 348 residues: Sulfate/thiosulfate import ATP-binding protein CysA (348 aa).

Residues 3 to 237 enclose the ABC transporter domain; sequence IEVRNIVKEF…PASAFVHGFI (235 aa). Residue 35 to 42 coordinates ATP; it reads GPSGSGKT.

The protein belongs to the ABC transporter superfamily. Sulfate/tungstate importer (TC 3.A.1.6) family. As to quaternary structure, the complex is composed of two ATP-binding proteins (CysA), two transmembrane proteins (CysT and CysW) and a solute-binding protein (CysP).

It localises to the cell inner membrane. It catalyses the reaction sulfate(out) + ATP + H2O = sulfate(in) + ADP + phosphate + H(+). The catalysed reaction is thiosulfate(out) + ATP + H2O = thiosulfate(in) + ADP + phosphate + H(+). In terms of biological role, part of the ABC transporter complex CysAWTP involved in sulfate/thiosulfate import. Responsible for energy coupling to the transport system. This Rhodopseudomonas palustris (strain ATCC BAA-98 / CGA009) protein is Sulfate/thiosulfate import ATP-binding protein CysA.